A 237-amino-acid chain; its full sequence is D-aminoacyl-tRNA deacylase (237 aa).

This sequence belongs to the DtdA deacylase family. In terms of assembly, monomer. It depends on Zn(2+) as a cofactor.

The catalysed reaction is a D-aminoacyl-tRNA + H2O = a tRNA + a D-alpha-amino acid + H(+). It catalyses the reaction glycyl-tRNA(Ala) + H2O = tRNA(Ala) + glycine + H(+). Functionally, D-aminoacyl-tRNA deacylase with broad substrate specificity. By recycling D-aminoacyl-tRNA to D-amino acids and free tRNA molecules, this enzyme counteracts the toxicity associated with the formation of D-aminoacyl-tRNA entities in vivo. This is D-aminoacyl-tRNA deacylase from Sulfurisphaera tokodaii (strain DSM 16993 / JCM 10545 / NBRC 100140 / 7) (Sulfolobus tokodaii).